The following is a 418-amino-acid chain: L-rhamnose isomerase (418 aa).

Mn(2+) contacts are provided by H262, D294, and D296.

It belongs to the rhamnose isomerase family. In terms of assembly, homotetramer. Mn(2+) is required as a cofactor.

Its subcellular location is the cytoplasm. The enzyme catalyses L-rhamnopyranose = L-rhamnulose. It functions in the pathway carbohydrate degradation; L-rhamnose degradation; glycerone phosphate from L-rhamnose: step 1/3. Its function is as follows. Catalyzes the interconversion of L-rhamnose and L-rhamnulose. The chain is L-rhamnose isomerase from Cronobacter sakazakii (strain ATCC BAA-894) (Enterobacter sakazakii).